The primary structure comprises 460 residues: Fumarate hydratase class II (460 aa).

Substrate-binding positions include 95 to 97 (SGT), 126 to 129 (HPND), 136 to 138 (SSN), and T184. The active-site Proton donor/acceptor is the H185. Residue S315 is part of the active site. Substrate-binding positions include S316 and 321–323 (KVN).

Belongs to the class-II fumarase/aspartase family. Fumarase subfamily. In terms of assembly, homotetramer.

It localises to the cytoplasm. The catalysed reaction is (S)-malate = fumarate + H2O. It functions in the pathway carbohydrate metabolism; tricarboxylic acid cycle; (S)-malate from fumarate: step 1/1. Involved in the TCA cycle. Catalyzes the stereospecific interconversion of fumarate to L-malate. The sequence is that of Fumarate hydratase class II from Chlamydia pneumoniae (Chlamydophila pneumoniae).